Consider the following 217-residue polypeptide: 3-demethoxyubiquinol 3-hydroxylase (217 aa).

Glu66, Glu96, His99, Glu148, Glu180, and His183 together coordinate Fe cation.

This sequence belongs to the COQ7 family. Fe cation is required as a cofactor.

It is found in the cell membrane. The catalysed reaction is a 5-methoxy-2-methyl-3-(all-trans-polyprenyl)benzene-1,4-diol + AH2 + O2 = a 3-demethylubiquinol + A + H2O. It participates in cofactor biosynthesis; ubiquinone biosynthesis. Its function is as follows. Catalyzes the hydroxylation of 2-nonaprenyl-3-methyl-6-methoxy-1,4-benzoquinol during ubiquinone biosynthesis. This chain is 3-demethoxyubiquinol 3-hydroxylase, found in Xylella fastidiosa (strain Temecula1 / ATCC 700964).